Reading from the N-terminus, the 378-residue chain is Lipid-A-disaccharide synthase (378 aa).

This sequence belongs to the LpxB family.

The enzyme catalyses a lipid X + a UDP-2-N,3-O-bis[(3R)-3-hydroxyacyl]-alpha-D-glucosamine = a lipid A disaccharide + UDP + H(+). It functions in the pathway bacterial outer membrane biogenesis; LPS lipid A biosynthesis. In terms of biological role, condensation of UDP-2,3-diacylglucosamine and 2,3-diacylglucosamine-1-phosphate to form lipid A disaccharide, a precursor of lipid A, a phosphorylated glycolipid that anchors the lipopolysaccharide to the outer membrane of the cell. The protein is Lipid-A-disaccharide synthase of Pseudomonas aeruginosa (strain UCBPP-PA14).